The primary structure comprises 562 residues: MDDNKRPLYLPFAGPAILEAPLINKGSAFSEEERIFFNLEGLVPYAIETIEEQASRAYDQFRSFNNDLDKHIYLRNIQDTNETLFYRLVQNHISEMMPIIYTPTVGLACERFSKNYRRNRGLFISYPNKDRIDDILNNSTRQKVKIIVVTDGERILGLGDQGIGGMGIPIGKLSLYTSCGGISPAYTLPITLDVGTDNPQLLEDPMYMGWRHPRIGGEEYAEFIEAFMQAVHVRWPDTLIQFEDFAQKNAMPILERYKERYCCFNDDIQGTAAVTVGSLLAACKAAGTELNKQRVAFLGAGSAGCGIAEAIVAQMVSEGISDEQARSQVCMVDRWGLLLDNMPNLLPFQQKLAQKCADISHWNNFSDNISLLDVVNNAKPTVLIGVSGAPGLFTEEIVRAMHSHCPRPIIFPLSNPTSRVEATPKDILHWTSGQALVATGSPFEPVVVDGETYEIAQCNNSFIFPGIGLGVLASGARHVSDAMLMASSRALAECSPLAINGSGPLLPKLEDIHSVSKHIAFAVGKVAIEQGLSLPASDELLMQSIEDNFWKPEYRRYKRTSF.

The Proton donor role is filled by Tyr-101. NAD(+) is bound at residue Arg-154. Lys-172 acts as the Proton acceptor in catalysis. A divalent metal cation-binding residues include Glu-243, Asp-244, and Asp-267. Positions 267 and 415 each coordinate NAD(+).

The protein belongs to the malic enzymes family. In terms of assembly, homotetramer. It depends on Mg(2+) as a cofactor. Requires Mn(2+) as cofactor.

The enzyme catalyses (S)-malate + NAD(+) = pyruvate + CO2 + NADH. It catalyses the reaction oxaloacetate + H(+) = pyruvate + CO2. The sequence is that of NAD-dependent malic enzyme from Shewanella oneidensis (strain ATCC 700550 / JCM 31522 / CIP 106686 / LMG 19005 / NCIMB 14063 / MR-1).